Reading from the N-terminus, the 151-residue chain is MAARLLSLYGRCLSAAGAMRGLPAARVRWESSRAVIAPSGVEKKRQREPTMQWQEDPEPEDENVYAKNPDFHGYDSDPVVDVWNMRAVFFFGFSIVLVFGTTFVAYVPDYRMQEWARREAERLVKYREVNGLPIMESNYFDPSKIQLPEDD.

Residues 1–29 (MAARLLSLYGRCLSAAGAMRGLPAARVRW) constitute a mitochondrion transit peptide. The tract at residues 40-62 (GVEKKRQREPTMQWQEDPEPEDE) is disordered. Residues 87-107 (AVFFFGFSIVLVFGTTFVAYV) traverse the membrane as a helical segment.

It belongs to the complex I NDUFB11 subunit family. As to quaternary structure, complex I is composed of 45 different subunits. Interacts with BCAP31.

Its subcellular location is the mitochondrion inner membrane. Accessory subunit of the mitochondrial membrane respiratory chain NADH dehydrogenase (Complex I), that is believed not to be involved in catalysis. Complex I functions in the transfer of electrons from NADH to the respiratory chain. The immediate electron acceptor for the enzyme is believed to be ubiquinone. The polypeptide is NADH dehydrogenase [ubiquinone] 1 beta subcomplex subunit 11, mitochondrial (Ndufb11) (Mus musculus (Mouse)).